We begin with the raw amino-acid sequence, 239 residues long: 1-(5-phosphoribosyl)-5-[(5-phosphoribosylamino)methylideneamino] imidazole-4-carboxamide isomerase (239 aa).

Asp-8 acts as the Proton acceptor in catalysis. Residue Asp-129 is the Proton donor of the active site.

The protein belongs to the HisA/HisF family.

It is found in the cytoplasm. The enzyme catalyses 1-(5-phospho-beta-D-ribosyl)-5-[(5-phospho-beta-D-ribosylamino)methylideneamino]imidazole-4-carboxamide = 5-[(5-phospho-1-deoxy-D-ribulos-1-ylimino)methylamino]-1-(5-phospho-beta-D-ribosyl)imidazole-4-carboxamide. Its pathway is amino-acid biosynthesis; L-histidine biosynthesis; L-histidine from 5-phospho-alpha-D-ribose 1-diphosphate: step 4/9. The polypeptide is 1-(5-phosphoribosyl)-5-[(5-phosphoribosylamino)methylideneamino] imidazole-4-carboxamide isomerase (Bacillus cereus (strain AH820)).